The chain runs to 204 residues: MSDKFQDRTMAFAGICQAAYLVQKVARDGSCDEAALRESLSSILVTNPSQPLEVFNNTHLAIRDGYRALVEQLGADGSQKNAELTRYVVSLIALERKLAKRKDILNMLGERISQIGRQQQHFDLLDEQILANMASIYSDLISPIGPRIQVAGTPLFLQQPLVQHKVRALLLAGIRACVLWRQLGGSRTQIIFARKKMVELAKRY.

It belongs to the HflD family.

Its subcellular location is the cytoplasm. The protein resides in the cell inner membrane. In Aeromonas hydrophila subsp. hydrophila (strain ATCC 7966 / DSM 30187 / BCRC 13018 / CCUG 14551 / JCM 1027 / KCTC 2358 / NCIMB 9240 / NCTC 8049), this protein is High frequency lysogenization protein HflD homolog.